Here is a 27-residue protein sequence, read N- to C-terminus: M-ectatotoxin-Eb2a (27 aa).

As to expression, expressed by the venom gland.

Its subcellular location is the secreted. Functionally, antimicrobial peptide forming an alpha-helix in watery and membraneous environments, enabling it to perforate membranes. Active against Gram-negative bacteria E.coli DH5alpha (MIC=5 uM), E.coli MH1 (MIC=0.6 uM) and P.aeruginosa PAO1 (MIC=10 uM) and against Gram-positive bacteria B.subtilis VKM B-501 (MIC=0.6 uM) and A.globiformis VKM Ac-1112 (MIC=0.2 uM). Has cytolytic and hemolytic activity. The sequence is that of M-ectatotoxin-Eb2a from Ectatomma brunneum (Ant).